Reading from the N-terminus, the 386-residue chain is 4-hydroxy-3-methylbut-2-en-1-yl diphosphate synthase (flavodoxin) (386 aa).

[4Fe-4S] cluster is bound by residues Cys-289, Cys-292, Cys-324, and Glu-331.

This sequence belongs to the IspG family. It depends on [4Fe-4S] cluster as a cofactor.

It catalyses the reaction (2E)-4-hydroxy-3-methylbut-2-enyl diphosphate + oxidized [flavodoxin] + H2O + 2 H(+) = 2-C-methyl-D-erythritol 2,4-cyclic diphosphate + reduced [flavodoxin]. It functions in the pathway isoprenoid biosynthesis; isopentenyl diphosphate biosynthesis via DXP pathway; isopentenyl diphosphate from 1-deoxy-D-xylulose 5-phosphate: step 5/6. Converts 2C-methyl-D-erythritol 2,4-cyclodiphosphate (ME-2,4cPP) into 1-hydroxy-2-methyl-2-(E)-butenyl 4-diphosphate. This is 4-hydroxy-3-methylbut-2-en-1-yl diphosphate synthase (flavodoxin) from Nitratidesulfovibrio vulgaris (strain ATCC 29579 / DSM 644 / CCUG 34227 / NCIMB 8303 / VKM B-1760 / Hildenborough) (Desulfovibrio vulgaris).